A 188-amino-acid polypeptide reads, in one-letter code: uncharacterized protein (188 aa).

Position 14 is a phosphoserine (S14). The segment at 165 to 188 is disordered; that stretch reads RQAMAAKRNRFRKNVRKLPNKKKH. The segment covering 171 to 188 has biased composition (basic residues); sequence KRNRFRKNVRKLPNKKKH.

The protein resides in the nucleus. Its subcellular location is the nucleolus. This is an uncharacterized protein from Schizosaccharomyces pombe (strain 972 / ATCC 24843) (Fission yeast).